Reading from the N-terminus, the 184-residue chain is MAPKAVLVGLPGSGKSTIGRRLAKALGVGLLDTDAAIEQQAGRSIAEIFATDGEEEFRRIEEEVVRAALADHDGVLSLGGGAVTSPGVRSALDGHTVVYLEISAAEGVRRTGGSNVRPLLAGPDRAEKFRALMSQRIPLYRRVSTIRVDTNRRNPGAVVRYIMSRLDDPTPNTSPSSTASGAAT.

ATP is bound at residue 12–17; it reads GSGKST. Mg(2+) is bound at residue serine 16. Aspartate 34, arginine 58, and glycine 80 together coordinate substrate. Arginine 117 provides a ligand contact to ATP. Arginine 136 contributes to the substrate binding site. ATP is bound at residue arginine 153. The segment at 163-184 is disordered; that stretch reads MSRLDDPTPNTSPSSTASGAAT. The segment covering 169 to 184 has biased composition (low complexity); that stretch reads PTPNTSPSSTASGAAT.

It belongs to the shikimate kinase family. As to quaternary structure, monomer. Mg(2+) is required as a cofactor.

It is found in the cytoplasm. The catalysed reaction is shikimate + ATP = 3-phosphoshikimate + ADP + H(+). It functions in the pathway metabolic intermediate biosynthesis; chorismate biosynthesis; chorismate from D-erythrose 4-phosphate and phosphoenolpyruvate: step 5/7. Its function is as follows. Catalyzes the specific phosphorylation of the 3-hydroxyl group of shikimic acid using ATP as a cosubstrate. This Mycobacterium marinum (strain ATCC BAA-535 / M) protein is Shikimate kinase.